Reading from the N-terminus, the 46-residue chain is Endochitinase 4 (46 aa).

This sequence belongs to the glycosyl hydrolase 19 family. Chitinase class I subfamily.

The catalysed reaction is Random endo-hydrolysis of N-acetyl-beta-D-glucosaminide (1-&gt;4)-beta-linkages in chitin and chitodextrins.. In terms of biological role, defense against chitin-containing fungal and bacterial pathogens. This chain is Endochitinase 4, found in Arachis hypogaea (Peanut).